We begin with the raw amino-acid sequence, 296 residues long: Enoyl-CoA hydratase domain-containing protein 2, mitochondrial (296 aa).

At K101 the chain carries N6-acetyllysine; alternate. K101 carries the N6-succinyllysine; alternate modification.

The protein belongs to the enoyl-CoA hydratase/isomerase family.

The protein resides in the mitochondrion. The polypeptide is Enoyl-CoA hydratase domain-containing protein 2, mitochondrial (ECHDC2) (Bos taurus (Bovine)).